Consider the following 259-residue polypeptide: Imidazole glycerol phosphate synthase subunit HisF (259 aa).

Catalysis depends on residues Asp-11 and Asp-130.

Belongs to the HisA/HisF family. As to quaternary structure, heterodimer of HisH and HisF.

It localises to the cytoplasm. The enzyme catalyses 5-[(5-phospho-1-deoxy-D-ribulos-1-ylimino)methylamino]-1-(5-phospho-beta-D-ribosyl)imidazole-4-carboxamide + L-glutamine = D-erythro-1-(imidazol-4-yl)glycerol 3-phosphate + 5-amino-1-(5-phospho-beta-D-ribosyl)imidazole-4-carboxamide + L-glutamate + H(+). It functions in the pathway amino-acid biosynthesis; L-histidine biosynthesis; L-histidine from 5-phospho-alpha-D-ribose 1-diphosphate: step 5/9. Its function is as follows. IGPS catalyzes the conversion of PRFAR and glutamine to IGP, AICAR and glutamate. The HisF subunit catalyzes the cyclization activity that produces IGP and AICAR from PRFAR using the ammonia provided by the HisH subunit. The sequence is that of Imidazole glycerol phosphate synthase subunit HisF from Syntrophobacter fumaroxidans (strain DSM 10017 / MPOB).